Here is a 336-residue protein sequence, read N- to C-terminus: Eukaryotic translation initiation factor 3 subunit H (336 aa).

The MPN domain maps to 21 to 154 (VQCDGLAAMK…LKAYRLTPQA (134 aa)).

This sequence belongs to the eIF-3 subunit H family. Component of the eukaryotic translation initiation factor 3 (eIF-3) complex.

The protein resides in the cytoplasm. In terms of biological role, component of the eukaryotic translation initiation factor 3 (eIF-3) complex, which is involved in protein synthesis of a specialized repertoire of mRNAs and, together with other initiation factors, stimulates binding of mRNA and methionyl-tRNAi to the 40S ribosome. The eIF-3 complex specifically targets and initiates translation of a subset of mRNAs involved in cell proliferation. The polypeptide is Eukaryotic translation initiation factor 3 subunit H (Culex quinquefasciatus (Southern house mosquito)).